The chain runs to 143 residues: Flagellar assembly factor FliW (143 aa).

This sequence belongs to the FliW family. Interacts with translational regulator CsrA and flagellin(s).

The protein resides in the cytoplasm. Functionally, acts as an anti-CsrA protein, binds CsrA and prevents it from repressing translation of its target genes, one of which is flagellin. Binds to flagellin and participates in the assembly of the flagellum. This chain is Flagellar assembly factor FliW, found in Clostridium novyi (strain NT).